The primary structure comprises 1124 residues: uncharacterized protein (1124 aa).

A signal peptide spans Met-1 to Ala-28. Helical transmembrane passes span Ile-332–Gly-352, Glu-359–Ile-379, Met-393–Met-413, Met-495–Val-515, Met-522–Ala-542, Met-555–Val-575, and Ile-700–Phe-720.

Belongs to the TrbL/VirB6 family.

Its subcellular location is the cell membrane. This is an uncharacterized protein from Rickettsia prowazekii (strain Madrid E).